The sequence spans 420 residues: Serine hydroxymethyltransferase (420 aa).

Residues Leu121 and 125-127 each bind (6S)-5,6,7,8-tetrahydrofolate; that span reads GHL. Residue Lys229 is modified to N6-(pyridoxal phosphate)lysine. Position 355–357 (355–357) interacts with (6S)-5,6,7,8-tetrahydrofolate; it reads SPF.

This sequence belongs to the SHMT family. As to quaternary structure, homodimer. The cofactor is pyridoxal 5'-phosphate.

It is found in the cytoplasm. The enzyme catalyses (6R)-5,10-methylene-5,6,7,8-tetrahydrofolate + glycine + H2O = (6S)-5,6,7,8-tetrahydrofolate + L-serine. The protein operates within one-carbon metabolism; tetrahydrofolate interconversion. It participates in amino-acid biosynthesis; glycine biosynthesis; glycine from L-serine: step 1/1. Its function is as follows. Catalyzes the reversible interconversion of serine and glycine with tetrahydrofolate (THF) serving as the one-carbon carrier. This reaction serves as the major source of one-carbon groups required for the biosynthesis of purines, thymidylate, methionine, and other important biomolecules. Also exhibits THF-independent aldolase activity toward beta-hydroxyamino acids, producing glycine and aldehydes, via a retro-aldol mechanism. The polypeptide is Serine hydroxymethyltransferase (Chromohalobacter salexigens (strain ATCC BAA-138 / DSM 3043 / CIP 106854 / NCIMB 13768 / 1H11)).